A 419-amino-acid polypeptide reads, in one-letter code: UDP-N-acetylglucosamine 1-carboxyvinyltransferase (419 aa).

22 to 23 (KN) is a phosphoenolpyruvate binding site. Arg-93 lines the UDP-N-acetyl-alpha-D-glucosamine pocket. Cys-117 serves as the catalytic Proton donor. A 2-(S-cysteinyl)pyruvic acid O-phosphothioketal modification is found at Cys-117. Residues Asp-306 and Val-328 each contribute to the UDP-N-acetyl-alpha-D-glucosamine site.

Belongs to the EPSP synthase family. MurA subfamily.

The protein localises to the cytoplasm. It catalyses the reaction phosphoenolpyruvate + UDP-N-acetyl-alpha-D-glucosamine = UDP-N-acetyl-3-O-(1-carboxyvinyl)-alpha-D-glucosamine + phosphate. It functions in the pathway cell wall biogenesis; peptidoglycan biosynthesis. Functionally, cell wall formation. Adds enolpyruvyl to UDP-N-acetylglucosamine. The protein is UDP-N-acetylglucosamine 1-carboxyvinyltransferase of Thioalkalivibrio sulfidiphilus (strain HL-EbGR7).